The sequence spans 109 residues: Cell division protein ZapA (109 aa).

Positions 21-99 (PEQRDALNQA…IEQALLEQGR (79 aa)) form a coiled coil.

Belongs to the ZapA family. Type 1 subfamily. In terms of assembly, homodimer. Interacts with FtsZ.

The protein localises to the cytoplasm. Functionally, activator of cell division through the inhibition of FtsZ GTPase activity, therefore promoting FtsZ assembly into bundles of protofilaments necessary for the formation of the division Z ring. It is recruited early at mid-cell but it is not essential for cell division. In Klebsiella pneumoniae subsp. pneumoniae (strain ATCC 700721 / MGH 78578), this protein is Cell division protein ZapA.